The sequence spans 366 residues: Chorismate synthase (366 aa).

NADP(+)-binding residues include Arg-48 and Arg-54. FMN contacts are provided by residues 125-127 (RSS), 238-239 (NA), Gly-278, 293-297 (KPTSS), and Arg-319.

This sequence belongs to the chorismate synthase family. Homotetramer. FMNH2 is required as a cofactor.

It carries out the reaction 5-O-(1-carboxyvinyl)-3-phosphoshikimate = chorismate + phosphate. It participates in metabolic intermediate biosynthesis; chorismate biosynthesis; chorismate from D-erythrose 4-phosphate and phosphoenolpyruvate: step 7/7. Functionally, catalyzes the anti-1,4-elimination of the C-3 phosphate and the C-6 proR hydrogen from 5-enolpyruvylshikimate-3-phosphate (EPSP) to yield chorismate, which is the branch point compound that serves as the starting substrate for the three terminal pathways of aromatic amino acid biosynthesis. This reaction introduces a second double bond into the aromatic ring system. This chain is Chorismate synthase, found in Burkholderia ambifaria (strain ATCC BAA-244 / DSM 16087 / CCUG 44356 / LMG 19182 / AMMD) (Burkholderia cepacia (strain AMMD)).